The sequence spans 641 residues: FAD-binding monooxygenase ausB (641 aa).

Residues 1-68 form a disordered region; it reads MAIGPKPESI…DSTTNVPYSL (68 aa). The span at 49-68 shows a compositional bias: polar residues; sequence WLTSTDQPQPDSTTNVPYSL. FAD is bound by residues 115–118, 127–128, and Tyr133; these read TWYW and DI. NADP(+) is bound at residue 125–127; it reads MCD. Residues 272–278 and 295–296 each bind NADP(+); these read TGSTAVQ and RT.

This sequence belongs to the FAD-binding monooxygenase family. It depends on FAD as a cofactor.

The enzyme catalyses protoaustinoid A + AH2 + O2 = berkeleyone A + A + H2O. It functions in the pathway secondary metabolite biosynthesis; terpenoid biosynthesis. Its function is as follows. FAD-binding monooxygenase; part of the gene cluster A that mediates the biosynthesis of the fungal meroterpenoid acetoxydehydroaustin. The first step of the pathway is the synthesis of 3,5-dimethylorsellinic acid by the polyketide synthase ausA. 3,5-dimethylorsellinic acid is then prenylated by the polyprenyl transferase ausN. Further epoxidation by the FAD-dependent monooxygenase ausM and cyclization by the probable terpene cyclase ausL lead to the formation of protoaustinoid A. Protoaustinoid A is then oxidized to spiro-lactone preaustinoid A3 by the combined action of the FAD-binding monooxygenases ausB and ausC, and the dioxygenase ausE. Acid-catalyzed keto-rearrangement and ring contraction of the tetraketide portion of preaustinoid A3 by ausJ lead to the formation of preaustinoid A4. The aldo-keto reductase ausK, with the help of ausH, is involved in the next step by transforming preaustinoid A4 into isoaustinone which is in turn hydroxylated by the P450 monooxygenase ausI to form austinolide. The cytochrome P450 monooxygenase ausG then modifies austinolide to austinol. Austinol is further acetylated to austin by the O-acetyltransferase ausP, which spontaneously changes to dehydroaustin. The cytochrome P450 monooxygenase then converts dehydroaustin is into 7-dehydrodehydroaustin. The hydroxylation catalyzed by ausR permits the second O-acetyltransferase ausQ to add an additional acetyl group to the molecule, leading to the formation of acetoxydehydroaustin. Due to genetic rearrangements of the clusters and the subsequent loss of some enzymes, the end product of the Penicillium brasilianum austinoid biosynthesis clusters is acetoxydehydroaustin. The protein is FAD-binding monooxygenase ausB of Penicillium brasilianum.